Consider the following 436-residue polypeptide: Eukaryotic peptide chain release factor subunit 1-1 (436 aa).

The protein belongs to the eukaryotic release factor 1 family. In terms of assembly, heterodimer of two subunits, one of which binds GTP.

It is found in the cytoplasm. Functionally, directs the termination of nascent peptide synthesis (translation) in response to the termination codons UAA, UAG and UGA. Modulates plant growth and development. The chain is Eukaryotic peptide chain release factor subunit 1-1 (ERF1-1) from Arabidopsis thaliana (Mouse-ear cress).